The chain runs to 95 residues: Small ribosomal subunit protein bS18 (95 aa).

Belongs to the bacterial ribosomal protein bS18 family. Part of the 30S ribosomal subunit. Forms a tight heterodimer with protein bS6.

Binds as a heterodimer with protein bS6 to the central domain of the 16S rRNA, where it helps stabilize the platform of the 30S subunit. The polypeptide is Small ribosomal subunit protein bS18 (Ehrlichia canis (strain Jake)).